Reading from the N-terminus, the 422-residue chain is Histidine--tRNA ligase (422 aa).

It belongs to the class-II aminoacyl-tRNA synthetase family. As to quaternary structure, homodimer.

The protein localises to the cytoplasm. The enzyme catalyses tRNA(His) + L-histidine + ATP = L-histidyl-tRNA(His) + AMP + diphosphate + H(+). This is Histidine--tRNA ligase from Vibrio atlanticus (strain LGP32) (Vibrio splendidus (strain Mel32)).